The sequence spans 489 residues: Glutamyl-tRNA(Gln) amidotransferase subunit A (489 aa).

Catalysis depends on charge relay system residues Lys77 and Ser157. Catalysis depends on Ser181, which acts as the Acyl-ester intermediate.

This sequence belongs to the amidase family. GatA subfamily. In terms of assembly, heterotrimer of A, B and C subunits.

The catalysed reaction is L-glutamyl-tRNA(Gln) + L-glutamine + ATP + H2O = L-glutaminyl-tRNA(Gln) + L-glutamate + ADP + phosphate + H(+). Allows the formation of correctly charged Gln-tRNA(Gln) through the transamidation of misacylated Glu-tRNA(Gln) in organisms which lack glutaminyl-tRNA synthetase. The reaction takes place in the presence of glutamine and ATP through an activated gamma-phospho-Glu-tRNA(Gln). The polypeptide is Glutamyl-tRNA(Gln) amidotransferase subunit A (Caulobacter vibrioides (strain ATCC 19089 / CIP 103742 / CB 15) (Caulobacter crescentus)).